Consider the following 538-residue polypeptide: Chaperonin GroEL 1 (538 aa).

ATP contacts are provided by residues 30–33 (TLGP), K51, 87–91 (DGTTT), G415, 479–481 (NAA), and D495.

This sequence belongs to the chaperonin (HSP60) family. In terms of assembly, forms a cylinder of 14 subunits composed of two heptameric rings stacked back-to-back. Interacts with the co-chaperonin GroES.

The protein resides in the cytoplasm. The catalysed reaction is ATP + H2O + a folded polypeptide = ADP + phosphate + an unfolded polypeptide.. Functionally, together with its co-chaperonin GroES, plays an essential role in assisting protein folding. The GroEL-GroES system forms a nano-cage that allows encapsulation of the non-native substrate proteins and provides a physical environment optimized to promote and accelerate protein folding. In Chromobacterium violaceum (strain ATCC 12472 / DSM 30191 / JCM 1249 / CCUG 213 / NBRC 12614 / NCIMB 9131 / NCTC 9757 / MK), this protein is Chaperonin GroEL 1.